Reading from the N-terminus, the 360-residue chain is Ribosomal RNA large subunit methyltransferase M (360 aa).

S-adenosyl-L-methionine-binding positions include Ser187, 220–223 (CPGG), Asp239, Asp259, and Asp276. The Proton acceptor role is filled by Lys305.

Belongs to the class I-like SAM-binding methyltransferase superfamily. RNA methyltransferase RlmE family. RlmM subfamily. In terms of assembly, monomer.

It localises to the cytoplasm. The catalysed reaction is cytidine(2498) in 23S rRNA + S-adenosyl-L-methionine = 2'-O-methylcytidine(2498) in 23S rRNA + S-adenosyl-L-homocysteine + H(+). In terms of biological role, catalyzes the 2'-O-methylation at nucleotide C2498 in 23S rRNA. The protein is Ribosomal RNA large subunit methyltransferase M of Photobacterium profundum (strain SS9).